The sequence spans 350 residues: Eukaryotic translation initiation factor 3 subunit I (350 aa).

6 WD repeats span residues 8–49 (GHER…GTLE), 51–89 (HQGV…CVYT), 91–135 (DSPS…ATLS), 149–188 (SEGS…LVTS), 198–240 (EKNV…KVYK), and 296–335 (GHFG…QDFL).

Belongs to the eIF-3 subunit I family. Component of the eukaryotic translation initiation factor 3 (eIF-3) complex.

The protein resides in the cytoplasm. Component of the eukaryotic translation initiation factor 3 (eIF-3) complex, which is involved in protein synthesis of a specialized repertoire of mRNAs and, together with other initiation factors, stimulates binding of mRNA and methionyl-tRNAi to the 40S ribosome. The eIF-3 complex specifically targets and initiates translation of a subset of mRNAs involved in cell proliferation. The protein is Eukaryotic translation initiation factor 3 subunit I of Candida albicans (strain SC5314 / ATCC MYA-2876) (Yeast).